Here is a 620-residue protein sequence, read N- to C-terminus: Translation initiation factor IF-2 (620 aa).

The region spanning 126 to 295 (KRPPIVTIMG…IVTAEIMELK (170 aa)) is the tr-type G domain. Residues 135-142 (GHVDHGKT) form a G1 region. Position 135-142 (135-142 (GHVDHGKT)) interacts with GTP. Residues 160–164 (NITQS) are G2. The segment at 181 to 184 (DTPG) is G3. Residues 181–185 (DTPGH) and 235–238 (NKMD) each bind GTP. The G4 stretch occupies residues 235–238 (NKMD). The G5 stretch occupies residues 271-273 (SAL).

It belongs to the TRAFAC class translation factor GTPase superfamily. Classic translation factor GTPase family. IF-2 subfamily.

Its subcellular location is the cytoplasm. In terms of biological role, one of the essential components for the initiation of protein synthesis. Protects formylmethionyl-tRNA from spontaneous hydrolysis and promotes its binding to the 30S ribosomal subunits. Also involved in the hydrolysis of GTP during the formation of the 70S ribosomal complex. The protein is Translation initiation factor IF-2 of Malacoplasma penetrans (strain HF-2) (Mycoplasma penetrans).